A 469-amino-acid polypeptide reads, in one-letter code: Mitochondrial-processing peptidase subunit beta (469 aa).

H78 serves as a coordination point for Zn(2+). E81 acts as the Proton acceptor in catalysis. 2 residues coordinate Zn(2+): H82 and E159.

It belongs to the peptidase M16 family. Heterodimer of alpha and beta subunits, forming the mitochondrial processing protease (MPP) in which subunit alpha is involved in substrate recognition and binding and subunit beta is the catalytic subunit. mppB is probably also part of the cytochrome bc1 complex as a core I protein in the mitochondrial inner membrane. The cofactor is Zn(2+).

Its subcellular location is the mitochondrion inner membrane. It is found in the mitochondrion matrix. The catalysed reaction is Release of N-terminal transit peptides from precursor proteins imported into the mitochondrion, typically with Arg in position P2.. Binding to alpha subunit is required for catalytic activity. Functionally, catalytic subunit of the essential mitochondrial processing protease (MPP), which cleaves the mitochondrial sequence off newly imported precursors proteins. Preferentially, cleaves after an arginine at position P2. Plays an essential role in mitochondrial biogenesis. This is Mitochondrial-processing peptidase subunit beta (mppB) from Dictyostelium discoideum (Social amoeba).